The chain runs to 104 residues: NADH dehydrogenase [ubiquinone] flavoprotein 3, mitochondrial (104 aa).

Residues M1–L35 constitute a mitochondrion transit peptide. Basic and acidic residues predominate over residues E38–P50. A disordered region spans residues E38–K68. S101 carries the post-translational modification Phosphoserine.

It belongs to the complex I NDUFV3 subunit family. As to quaternary structure, complex I is composed of 45 different subunits. This is a component of the flavoprotein-sulfur (FP) fragment of the enzyme.

Its subcellular location is the mitochondrion inner membrane. In terms of biological role, accessory subunit of the mitochondrial membrane respiratory chain NADH dehydrogenase (Complex I), that is believed not to be involved in catalysis. Complex I functions in the transfer of electrons from NADH to the respiratory chain. The immediate electron acceptor for the enzyme is believed to be ubiquinone. May be the terminally assembled subunit of Complex I. This is NADH dehydrogenase [ubiquinone] flavoprotein 3, mitochondrial (Ndufv3) from Mus musculus (Mouse).